The sequence spans 177 residues: ATP synthase subunit delta (177 aa).

This sequence belongs to the ATPase delta chain family. As to quaternary structure, F-type ATPases have 2 components, F(1) - the catalytic core - and F(0) - the membrane proton channel. F(1) has five subunits: alpha(3), beta(3), gamma(1), delta(1), epsilon(1). F(0) has three main subunits: a(1), b(2) and c(10-14). The alpha and beta chains form an alternating ring which encloses part of the gamma chain. F(1) is attached to F(0) by a central stalk formed by the gamma and epsilon chains, while a peripheral stalk is formed by the delta and b chains.

It localises to the cell inner membrane. Its function is as follows. F(1)F(0) ATP synthase produces ATP from ADP in the presence of a proton or sodium gradient. F-type ATPases consist of two structural domains, F(1) containing the extramembraneous catalytic core and F(0) containing the membrane proton channel, linked together by a central stalk and a peripheral stalk. During catalysis, ATP synthesis in the catalytic domain of F(1) is coupled via a rotary mechanism of the central stalk subunits to proton translocation. This protein is part of the stalk that links CF(0) to CF(1). It either transmits conformational changes from CF(0) to CF(1) or is implicated in proton conduction. The polypeptide is ATP synthase subunit delta (Shewanella amazonensis (strain ATCC BAA-1098 / SB2B)).